The primary structure comprises 421 residues: Testin (421 aa).

Residues 92–199 enclose the PET domain; that stretch reads MILTNPVAAK…GDVKLPCEMD (108 aa). 3 LIM zinc-binding domains span residues 234–297, 299–359, and 362–421; these read YSCY…CDSE, PRCA…NHAV, and QGCH…KRMS.

The protein belongs to the prickle / espinas / testin family. In terms of assembly, interacts via LIM domain 1 with ZYX. Interacts (via LIM domain 3) with ENAH and VASP. Interacts with ALKBH4, talin, actin, alpha-actinin, GRIP1 and PXN. Interacts (via LIM domain 2) with ACTL7A (via N-terminus). Heterodimer with ACTL7A; the heterodimer interacts with ENAH to form a heterotrimer.

The protein localises to the cytoplasm. It is found in the cell junction. Its subcellular location is the focal adhesion. Functionally, scaffold protein that may play a role in cell adhesion, cell spreading and in the reorganization of the actin cytoskeleton. Plays a role in the regulation of cell proliferation. May act as a tumor suppressor. This Nomascus leucogenys (Northern white-cheeked gibbon) protein is Testin (TES).